We begin with the raw amino-acid sequence, 78 residues long: UPF0270 protein YE3952 (78 aa).

Belongs to the UPF0270 family.

The polypeptide is UPF0270 protein YE3952 (Yersinia enterocolitica serotype O:8 / biotype 1B (strain NCTC 13174 / 8081)).